A 210-amino-acid chain; its full sequence is Transmembrane protein 61 (210 aa).

A run of 2 helical transmembrane segments spans residues 18–38 (YCMTVSGTVVLVAGTLCFAWW) and 69–89 (VSFVCCGAGGLLLLIGLLWSV). The interval 140–172 (VAEGPPTPPAYPTEEALEPSGSRDALLSTQPAW) is disordered.

The protein localises to the membrane. In Homo sapiens (Human), this protein is Transmembrane protein 61 (TMEM61).